Consider the following 130-residue polypeptide: Small ribosomal subunit protein uS9 (130 aa).

It belongs to the universal ribosomal protein uS9 family.

The polypeptide is Small ribosomal subunit protein uS9 (Pseudomonas paraeruginosa (strain DSM 24068 / PA7) (Pseudomonas aeruginosa (strain PA7))).